Reading from the N-terminus, the 50-residue chain is Thrombin-like enzyme BpirSP41 (50 aa).

Residues 1 to 50 (VVGGDECDINEHPFLAFLYSHGYFCGLTLINQEWVLTAAHCDRRFMRIYL) enclose the Peptidase S1 domain. A disulfide bridge connects residues Cys25 and Cys41. His40 acts as the Charge relay system in catalysis.

The protein belongs to the peptidase S1 family. Snake venom subfamily. As to quaternary structure, monomer. Post-translationally, N-glycosylated. Expressed by the venom gland.

The protein localises to the secreted. Its activity is regulated as follows. Inhibited by serine protease inhibitors PMSF, benzamidine, leupeptin and aprotinin, as well as by copper ions (Cu2+). Not inhibited by metalloprotease inhibitors EDTA, EGTA and 1,10-phenanthroline, as well as by barium (Ba2+) and calcium ion (Ca2+). Snake venom serine protease that interferes with the hemostatic system of the prey. It almost completely degrades both Aalpha (FGA) and Bbeta (FGB) chains of fibrinogen. It presents a higher ability to degrade fibrin clots than BpirSP27. It hydrolyzes chromogenic substrates S-2238 (used for testing thrombin activity), S-2222 (factor Xa), S-2266 (glandular kallikrein and factor XIa), and S-2302 (plasma kallikrein, factor XIa and XIIa). It shows a decrease in the clotting time of human plasma in the presence of increasing doses of the enzyme. Its minimum coagulant dose (MCD) is 20 ug. It promotes platelet aggregation with a maximum of aggregation of 20%, regardless of the concentration increase or the presence of calcium. It also shows 40% inhibition of the hemolytic activity promoted by the complement pathways and possess only a minor role in the induction of edema and pain in rat. The sequence is that of Thrombin-like enzyme BpirSP41 from Bothrops pirajai (Piraja's lancehead).